The sequence spans 201 residues: Small ribosomal subunit protein uS4c (201 aa).

Residues 20 to 39 form a disordered region; sequence GLTRKTPKSGSNLKKKFHSG. Residues 89 to 150 form the S4 RNA-binding domain; it reads MRLDNILFRL…NQRSKRLVQN (62 aa).

Belongs to the universal ribosomal protein uS4 family. Part of the 30S ribosomal subunit. Contacts protein S5. The interaction surface between S4 and S5 is involved in control of translational fidelity.

The protein localises to the plastid. It is found in the chloroplast. One of the primary rRNA binding proteins, it binds directly to 16S rRNA where it nucleates assembly of the body of the 30S subunit. Its function is as follows. With S5 and S12 plays an important role in translational accuracy. This chain is Small ribosomal subunit protein uS4c (rps4), found in Oryza nivara (Indian wild rice).